The following is a 236-amino-acid chain: MRFNPPLEEARLIRRYKRFLTDIETVTGELLTIHCPNTGSMLNCMVEGGQVWFSRSNDPKRKLPGTWEIAETPQGRLACVNTARANQLVEEALLAGVITELNGFTALKREVPYGQEKSRIDFRLDYPDGAAYVEVKSVTLGFDGSAVAAFPDAVTQRGAKHLRELAHLARQGVRAVQLYCVNLSGIDAVRPAVEIDAAYAAALREAKSAGVEVLAYGVRVTSEEICVDRRLDVLLD.

The protein belongs to the SfsA family.

This Pseudomonas fluorescens (strain SBW25) protein is Sugar fermentation stimulation protein homolog.